The chain runs to 88 residues: Small ribosomal subunit protein bS16c (88 aa).

It belongs to the bacterial ribosomal protein bS16 family.

It localises to the plastid. Its subcellular location is the chloroplast. This is Small ribosomal subunit protein bS16c from Solanum bulbocastanum (Wild potato).